Reading from the N-terminus, the 266-residue chain is Interleukin-1 beta (266 aa).

Positions 1–114 are excised as a propeptide; that stretch reads MAAVPELTSE…KTDADNFMSD (114 aa).

Belongs to the IL-1 family. In terms of assembly, monomer. In its precursor form, weakly interacts with full-length MEFV; the mature cytokine does not interact at all. Interacts with integrins ITGAV:ITGBV and ITGA5:ITGB1; integrin-binding is required for IL1B signaling. Interacts with cargo receptor TMED10; the interaction is direct and is required for the secretion of IL1B mature form. Interacts with HSP90AB1; the interaction facilitates cargo translocation into the ERGIC. Interacts with HSP90B1; the interaction facilitates cargo translocation into the ERGIC.

It localises to the cytoplasm. The protein localises to the cytosol. Its subcellular location is the secreted. The protein resides in the lysosome. It is found in the extracellular exosome. Its function is as follows. Potent pro-inflammatory cytokine. Initially discovered as the major endogenous pyrogen, induces prostaglandin synthesis, neutrophil influx and activation, T-cell activation and cytokine production, B-cell activation and antibody production, and fibroblast proliferation and collagen production. Promotes Th17 differentiation of T-cells. Synergizes with IL12/interleukin-12 to induce IFNG synthesis from T-helper 1 (Th1) cells. Plays a role in angiogenesis by inducing VEGF production synergistically with TNF and IL6. Involved in transduction of inflammation downstream of pyroptosis: its mature form is specifically released in the extracellular milieu by passing through the gasdermin-D (GSDMD) pore. This is Interleukin-1 beta (IL1B) from Canis lupus familiaris (Dog).